We begin with the raw amino-acid sequence, 534 residues long: NAD(P)H-quinone oxidoreductase chain 4 (534 aa).

14 helical membrane passes run 12-32 (FPWL…IPFF), 44-64 (FALS…INGF), 94-114 (ISMP…LAAW), 120-140 (PKLF…VFAV), 144-164 (LLFF…LAIW), 176-196 (FIIY…AMGF), 220-240 (ILCY…VPLH), 251-271 (TAPV…YALL), 285-305 (FAPL…LTSF), 314-334 (IAYS…SFSS), 340-360 (AMLQ…LVGA), 384-404 (FALW…SGFV), 425-445 (VIMA…LLSM), and 472-492 (VYII…PRLV).

The protein belongs to the complex I subunit 4 family.

It is found in the cellular thylakoid membrane. The catalysed reaction is a plastoquinone + NADH + (n+1) H(+)(in) = a plastoquinol + NAD(+) + n H(+)(out). It carries out the reaction a plastoquinone + NADPH + (n+1) H(+)(in) = a plastoquinol + NADP(+) + n H(+)(out). NDH-1 shuttles electrons from NAD(P)H, via FMN and iron-sulfur (Fe-S) centers, to quinones in the respiratory chain. The immediate electron acceptor for the enzyme in this species is believed to be plastoquinone. Couples the redox reaction to proton translocation (for every two electrons transferred, four hydrogen ions are translocated across the cytoplasmic membrane), and thus conserves the redox energy in a proton gradient. This chain is NAD(P)H-quinone oxidoreductase chain 4, found in Prochlorococcus marinus (strain MIT 9312).